The following is a 275-amino-acid chain: Protein FAM210A (275 aa).

Residues 68-108 (SSQPADTPRKVPEEREPLTSATEVPKQSPVESDASDPDPLQ) are disordered. Basic and acidic residues predominate over residues 74–84 (TPRKVPEEREP). Residues 109-221 (DKSISLVQRF…GYMSTPPPVK (113 aa)) enclose the DUF1279 domain. A helical membrane pass occupies residues 128 to 148 (VMIPVHLVTSTVWFGSFYYAA). A coiled-coil region spans residues 221 to 271 (KEYLQDRMEETKDKITEKMEETKDKITEKMEETKDKITEKIQETKDKVSFK).

The protein belongs to the FAM210 family. In terms of assembly, interacts with ATAD3A.

The protein localises to the membrane. The protein resides in the mitochondrion. Its subcellular location is the cytoplasm. May play a role in the structure and strength of both muscle and bone. The chain is Protein FAM210A (FAM210A) from Gallus gallus (Chicken).